A 304-amino-acid polypeptide reads, in one-letter code: Probable phytol kinase 2, chloroplastic (304 aa).

A chloroplast-targeting transit peptide spans 1-59 (MVSLISAHLLSLPSSAPRSRPQSRPPLSPPAAAAAASCSFDLPRPRRLVADGSRRKGTM). The next 7 helical transmembrane spans lie at 68-88 (SGLA…LALL), 113-133 (IGMV…APFL), 134-154 (AAVA…GVMK), 170-190 (ELLK…SIFW), 194-214 (PIAI…DIVG), 231-251 (AGSI…MHYF), and 256-276 (FIEE…TAAL).

The protein belongs to the polyprenol kinase family.

The protein localises to the plastid. Its subcellular location is the chloroplast membrane. The catalysed reaction is phytol + CTP = phytyl phosphate + CDP + H(+). It functions in the pathway cofactor biosynthesis; tocopherol biosynthesis. Involved in the activation and reutilization of phytol from chlorophyll degradation in plant metabolism, including tocopherol biosynthesis. Catalyzes the conversion of phytol to phytol monophosphate (PMP). The protein is Probable phytol kinase 2, chloroplastic of Oryza sativa subsp. japonica (Rice).